The following is a 141-amino-acid chain: uncharacterized protein (141 aa).

This is an uncharacterized protein from Human cytomegalovirus (strain AD169) (HHV-5).